The sequence spans 439 residues: Glutamate--tRNA ligase 1 (439 aa).

A 'HIGH' region motif is present at residues 6 to 16 (PSPTGDMHIGN). The 'KMSKS' region motif lies at 232–236 (KMSKR). An ATP-binding site is contributed by Lys-235.

This sequence belongs to the class-I aminoacyl-tRNA synthetase family. Glutamate--tRNA ligase type 1 subfamily. As to quaternary structure, monomer.

It is found in the cytoplasm. The catalysed reaction is tRNA(Glu) + L-glutamate + ATP = L-glutamyl-tRNA(Glu) + AMP + diphosphate. Functionally, catalyzes the attachment of glutamate to tRNA(Glu) in a two-step reaction: glutamate is first activated by ATP to form Glu-AMP and then transferred to the acceptor end of tRNA(Glu). This Helicobacter acinonychis (strain Sheeba) protein is Glutamate--tRNA ligase 1.